The sequence spans 150 residues: Large ribosomal subunit protein uL15 (150 aa).

A disordered region spans residues 1–52 (MITLNTLKDSTRKRKPRKRVGRGIGSKHGKTCGRGEKGAGARSGYKRRLGKE). Residues 11–31 (TRKRKPRKRVGRGIGSKHGKT) show a composition bias toward basic residues.

The protein belongs to the universal ribosomal protein uL15 family. As to quaternary structure, part of the 50S ribosomal subunit.

Its function is as follows. Binds to the 23S rRNA. In Protochlamydia amoebophila (strain UWE25), this protein is Large ribosomal subunit protein uL15.